A 209-amino-acid chain; its full sequence is Thiamine-phosphate synthase 1 (209 aa).

Residues 39–43 (QFREK) and Asn-74 contribute to the 4-amino-2-methyl-5-(diphosphooxymethyl)pyrimidine site. 2 residues coordinate Mg(2+): Asp-75 and Asp-94. Ser-112 contributes to the 4-amino-2-methyl-5-(diphosphooxymethyl)pyrimidine binding site. 138 to 140 (TQS) serves as a coordination point for 2-[(2R,5Z)-2-carboxy-4-methylthiazol-5(2H)-ylidene]ethyl phosphate. Lys-141 contacts 4-amino-2-methyl-5-(diphosphooxymethyl)pyrimidine. 2-[(2R,5Z)-2-carboxy-4-methylthiazol-5(2H)-ylidene]ethyl phosphate-binding positions include Gly-170 and 190-191 (IS).

It belongs to the thiamine-phosphate synthase family. The cofactor is Mg(2+).

It catalyses the reaction 2-[(2R,5Z)-2-carboxy-4-methylthiazol-5(2H)-ylidene]ethyl phosphate + 4-amino-2-methyl-5-(diphosphooxymethyl)pyrimidine + 2 H(+) = thiamine phosphate + CO2 + diphosphate. It carries out the reaction 2-(2-carboxy-4-methylthiazol-5-yl)ethyl phosphate + 4-amino-2-methyl-5-(diphosphooxymethyl)pyrimidine + 2 H(+) = thiamine phosphate + CO2 + diphosphate. The enzyme catalyses 4-methyl-5-(2-phosphooxyethyl)-thiazole + 4-amino-2-methyl-5-(diphosphooxymethyl)pyrimidine + H(+) = thiamine phosphate + diphosphate. Its pathway is cofactor biosynthesis; thiamine diphosphate biosynthesis; thiamine phosphate from 4-amino-2-methyl-5-diphosphomethylpyrimidine and 4-methyl-5-(2-phosphoethyl)-thiazole: step 1/1. Condenses 4-methyl-5-(beta-hydroxyethyl)thiazole monophosphate (THZ-P) and 2-methyl-4-amino-5-hydroxymethyl pyrimidine pyrophosphate (HMP-PP) to form thiamine monophosphate (TMP). The chain is Thiamine-phosphate synthase 1 from Streptococcus pneumoniae (strain ATCC BAA-255 / R6).